The chain runs to 247 residues: Carboxy-S-adenosyl-L-methionine synthase (247 aa).

Residues tyrosine 40, 65-67 (GSS), 90-91 (DN), 122-123 (DI), asparagine 137, and arginine 204 each bind S-adenosyl-L-methionine.

It belongs to the class I-like SAM-binding methyltransferase superfamily. Cx-SAM synthase family. In terms of assembly, homodimer.

The catalysed reaction is prephenate + S-adenosyl-L-methionine = carboxy-S-adenosyl-L-methionine + 3-phenylpyruvate + H2O. Catalyzes the conversion of S-adenosyl-L-methionine (SAM) to carboxy-S-adenosyl-L-methionine (Cx-SAM). In Pseudomonas fluorescens (strain ATCC BAA-477 / NRRL B-23932 / Pf-5), this protein is Carboxy-S-adenosyl-L-methionine synthase.